A 488-amino-acid chain; its full sequence is Facilitated trehalose transporter Tret1-2 homolog (488 aa).

Topologically, residues Met1–Gln28 are cytoplasmic. A helical transmembrane segment spans residues Val29–Thr49. The Extracellular segment spans residues Ser50–Ser72. The chain crosses the membrane as a helical span at residues Trp73–Ile93. Over Glu94–Thr105 the chain is Cytoplasmic. A helical transmembrane segment spans residues Ala106–Leu126. Residues Cys127–Arg129 lie on the Extracellular side of the membrane. Residues Phe130–Thr150 form a helical membrane-spanning segment. The Cytoplasmic segment spans residues Leu151–Gly160. The helical transmembrane segment at Leu161–Met181 threads the bilayer. Residue Asn182 is glycosylated (N-linked (GlcNAc...) asparagine). Over Asn182–Ser184 the chain is Extracellular. A helical membrane pass occupies residues Ile185–Pro205. The Cytoplasmic segment spans residues Glu206–Pro268. A helical transmembrane segment spans residues Leu269–Phe289. Residues Tyr290 to Asn305 lie on the Extracellular side of the membrane. The chain crosses the membrane as a helical span at residues Leu306 to Ile326. The Cytoplasmic segment spans residues Asp327–Lys332. The chain crosses the membrane as a helical span at residues Ile333–Phe353. Residues Tyr354–Cys372 are Extracellular-facing. The helical transmembrane segment at Phe373–Gly393 threads the bilayer. The Cytoplasmic portion of the chain corresponds to Glu394–Gly402. The helical transmembrane segment at Pro403 to Phe423 threads the bilayer. At Gln424–His433 the chain is on the extracellular side. A helical transmembrane segment spans residues Gly434–Val454. Topologically, residues Pro455–Met488 are cytoplasmic.

It belongs to the major facilitator superfamily. Sugar transporter (TC 2.A.1.1) family. Trehalose transporter subfamily.

It is found in the cell membrane. Fails to transport trehalose. This chain is Facilitated trehalose transporter Tret1-2 homolog, found in Drosophila sechellia (Fruit fly).